The primary structure comprises 612 residues: Amyloid-beta precursor-like protein (612 aa).

Positions 1–21 (MGPSVRPGFLVVVIGLQFVAA) are cleaved as a signal peptide. Residues 22-542 (SMEVNSRKFE…NLYANSHANS (521 aa)) lie on the Extracellular side of the membrane. Positions 28–122 (RKFEPMVAFI…PFRCLVGPFQ (95 aa)) are GFLD subdomain. One can recognise an E1 domain in the interval 28 to 189 (RKFEPMVAFI…SGVEFVCCPK (162 aa)). 6 disulfides stabilise this stretch: cysteine 38–cysteine 60, cysteine 71–cysteine 116, cysteine 96–cysteine 103, cysteine 132–cysteine 187, cysteine 143–cysteine 173, and cysteine 157–cysteine 186. Residues asparagine 99, asparagine 108, and asparagine 150 are each glycosylated (N-linked (GlcNAc...) asparagine). The cuBD subdomain stretch occupies residues 130–189 (EHCIFDHYHDPRVCNEFDQCNETAMSKCSARGMTTQSFAMLWPCQEPGHFSGVEFVCCPK). Residues 223–419 (GDSKYMSKYA…KQVRPNIDKF (197 aa)) form the E2 domain. Disordered regions lie at residues 251 to 276 (ERDT…TDPK) and 437 to 490 (QEPT…FDSE). 2 stretches are compositionally biased toward basic and acidic residues: residues 439 to 453 (PTPK…KAED) and 470 to 483 (KPTE…EDIK). Residues 543 to 563 (VLGIAIGGVVVFIIIVVAVVM) form a helical membrane-spanning segment. The Cytoplasmic portion of the chain corresponds to 564-612 (LKRRTQRQRVTHGFVEVDPAASPEERHVANMQMSGYENPTYKYFEMQNQ). The interval 598-612 (GYENPTYKYFEMQNQ) is required for the interaction with kinesin heavy chain and for anterograde transport in axons. The short motif at 599–604 (YENPTY) is the YENPXY motif element.

Belongs to the APP family. Interacts (via cytoplasmic domain) with kinesin heavy chain. Expressed in the cervicothoracic ganglion (stellate ganglion) (at protein level).

It localises to the cell membrane. The protein localises to the cell projection. It is found in the axon. Acts as a kinesin I membrane receptor, thereby playing a role in axonal anterograde transport of cargo towards synapses in axons. The polypeptide is Amyloid-beta precursor-like protein (Doryteuthis pealeii (Longfin inshore squid)).